The primary structure comprises 461 residues: BSD domain-containing protein 1 (461 aa).

Phosphoserine occurs at positions 123 and 197. Positions 177-229 constitute a BSD domain; that stretch reads WLSQFCLEEKKGEISELLVGSPSIRALYTKMVPAAVSHSEFWHRYFYKVHQLE. The disordered stretch occupies residues 239-384; the sequence is KQRAEQSISE…SGPEPRPPAR (146 aa). Positions 250–259 are enriched in acidic residues; sequence PGWEEEEEEL. Residues 295-318 are compositionally biased toward low complexity; that stretch reads LVTPVEPPTEVTPSESSESVSLVT. The residue at position 387 (Thr-387) is a Phosphothreonine. The tract at residues 398 to 430 is disordered; sequence VFELNSDSGKSTPSNNGKKGSSTDISEDWEKDF. Residues 402–421 are compositionally biased toward polar residues; it reads NSDSGKSTPSNNGKKGSSTD. Residues Ser-418, Ser-419, and Ser-449 each carry the phosphoserine modification.

The sequence is that of BSD domain-containing protein 1 (BSDC1) from Bos taurus (Bovine).